The following is a 377-amino-acid chain: Secreted LysM effector Lys2 (377 aa).

Positions 1–22 are cleaved as a signal peptide; it reads MVRQSIGLIALQLLNLVSVAQA. Over residues 104–119 the composition is skewed to low complexity; that stretch reads TSSSTATTTSQKPTAT. The interval 104-124 is disordered; it reads TSSSTATTTSQKPTATVSPLP. 2 LysM domains span residues 135-182 and 207-253; these read KYYN…YVCV and KYYK…YYCV.

Belongs to the secreted LysM effector family.

Functionally, might have a role in sequestration of chitin oligosaccharides (breakdown products of fungal cell walls that are released during invasion and act as triggers of host immunity) to dampen host defense. The polypeptide is Secreted LysM effector Lys2 (Pochonia chlamydosporia (strain 123) (Metacordyceps chlamydosporia)).